The following is a 357-amino-acid chain: Cobalt-precorrin-5B C(1)-methyltransferase (357 aa).

It belongs to the CbiD family.

It carries out the reaction Co-precorrin-5B + S-adenosyl-L-methionine = Co-precorrin-6A + S-adenosyl-L-homocysteine. It functions in the pathway cofactor biosynthesis; adenosylcobalamin biosynthesis; cob(II)yrinate a,c-diamide from sirohydrochlorin (anaerobic route): step 6/10. Functionally, catalyzes the methylation of C-1 in cobalt-precorrin-5B to form cobalt-precorrin-6A. The protein is Cobalt-precorrin-5B C(1)-methyltransferase of Rhodospirillum rubrum (strain ATCC 11170 / ATH 1.1.1 / DSM 467 / LMG 4362 / NCIMB 8255 / S1).